The chain runs to 471 residues: Isochorismate synthase MenF (471 aa).

Lys226 (proton acceptor) is an active-site residue. The active-site Proton donor is the Glu275. Mg(2+) is bound by residues Glu319 and Glu454.

It belongs to the isochorismate synthase family. It depends on Mg(2+) as a cofactor.

The catalysed reaction is chorismate = isochorismate. The protein operates within quinol/quinone metabolism; 1,4-dihydroxy-2-naphthoate biosynthesis; 1,4-dihydroxy-2-naphthoate from chorismate: step 1/7. It functions in the pathway quinol/quinone metabolism; menaquinone biosynthesis. Catalyzes the conversion of chorismate to isochorismate. In Bacillus subtilis (strain 168), this protein is Isochorismate synthase MenF.